Reading from the N-terminus, the 404-residue chain is Na(+)/H(+) antiporter NhaA 2 (404 aa).

The next 11 helical transmembrane spans lie at 24–44 (GIIL…SFSG), 67–87 (VLHW…GMEI), 103–123 (ILPI…YALF), 132–152 (GWGI…SLVA), 161–181 (VFLT…IAIF), 184–204 (SQIS…LILA), 216–236 (IILG…ATIA), 266–286 (TPWS…GIII), 303–323 (IIFG…FILI), 339–359 (LYGA…VSSL), and 372–392 (MCIM…FKFI).

This sequence belongs to the NhaA Na(+)/H(+) (TC 2.A.33) antiporter family.

The protein resides in the cell membrane. It carries out the reaction Na(+)(in) + 2 H(+)(out) = Na(+)(out) + 2 H(+)(in). Its function is as follows. Na(+)/H(+) antiporter that extrudes sodium in exchange for external protons. In Clostridium beijerinckii (strain ATCC 51743 / NCIMB 8052) (Clostridium acetobutylicum), this protein is Na(+)/H(+) antiporter NhaA 2.